A 201-amino-acid polypeptide reads, in one-letter code: Recombination protein RecR (201 aa).

The C4-type zinc-finger motif lies at 57–72 (CRSCRTFTEEDECNIC). One can recognise a Toprim domain in the interval 81-176 (GQLCVVEMPE…KVTRIAHGIP (96 aa)).

Belongs to the RecR family.

Its function is as follows. May play a role in DNA repair. It seems to be involved in an RecBC-independent recombinational process of DNA repair. It may act with RecF and RecO. The chain is Recombination protein RecR from Actinobacillus pleuropneumoniae serotype 5b (strain L20).